The chain runs to 242 residues: NAD(P)H-quinone oxidoreductase subunit K (242 aa).

[4Fe-4S] cluster contacts are provided by Cys-60, Cys-61, Cys-125, and Cys-156.

This sequence belongs to the complex I 20 kDa subunit family. NDH-1 can be composed of about 15 different subunits; different subcomplexes with different compositions have been identified which probably have different functions. Requires [4Fe-4S] cluster as cofactor.

It localises to the cellular thylakoid membrane. The enzyme catalyses a plastoquinone + NADH + (n+1) H(+)(in) = a plastoquinol + NAD(+) + n H(+)(out). It carries out the reaction a plastoquinone + NADPH + (n+1) H(+)(in) = a plastoquinol + NADP(+) + n H(+)(out). Functionally, NDH-1 shuttles electrons from an unknown electron donor, via FMN and iron-sulfur (Fe-S) centers, to quinones in the respiratory and/or the photosynthetic chain. The immediate electron acceptor for the enzyme in this species is believed to be plastoquinone. Couples the redox reaction to proton translocation, and thus conserves the redox energy in a proton gradient. Cyanobacterial NDH-1 also plays a role in inorganic carbon-concentration. The protein is NAD(P)H-quinone oxidoreductase subunit K of Prochlorococcus marinus (strain SARG / CCMP1375 / SS120).